The following is a 92-amino-acid chain: MSEANVNNQEKSTRKVRTGYVVSDKMQKTIVVEVEDRKQHALYGKILRSAKKVKAHDEEQIAGIGDLVRIEETRPLSKDKNYRLIEIVEKAK.

This sequence belongs to the universal ribosomal protein uS17 family. Part of the 30S ribosomal subunit.

In terms of biological role, one of the primary rRNA binding proteins, it binds specifically to the 5'-end of 16S ribosomal RNA. The chain is Small ribosomal subunit protein uS17 from Corynebacterium glutamicum (strain ATCC 13032 / DSM 20300 / JCM 1318 / BCRC 11384 / CCUG 27702 / LMG 3730 / NBRC 12168 / NCIMB 10025 / NRRL B-2784 / 534).